The chain runs to 669 residues: tRNA 5-methylaminomethyl-2-thiouridine biosynthesis bifunctional protein MnmC (669 aa).

The tRNA (mnm(5)s(2)U34)-methyltransferase stretch occupies residues 1-246 (MIKNANIHFN…KRSMLIGTLK (246 aa)). Residues 271-669 (IGGGIASSCI…IVRDLIRNKI (399 aa)) form an FAD-dependent cmnm(5)s(2)U34 oxidoreductase region.

This sequence in the N-terminal section; belongs to the methyltransferase superfamily. tRNA (mnm(5)s(2)U34)-methyltransferase family. It in the C-terminal section; belongs to the DAO family. Requires FAD as cofactor.

Its subcellular location is the cytoplasm. The enzyme catalyses 5-aminomethyl-2-thiouridine(34) in tRNA + S-adenosyl-L-methionine = 5-methylaminomethyl-2-thiouridine(34) in tRNA + S-adenosyl-L-homocysteine + H(+). Its function is as follows. Catalyzes the last two steps in the biosynthesis of 5-methylaminomethyl-2-thiouridine (mnm(5)s(2)U) at the wobble position (U34) in tRNA. Catalyzes the FAD-dependent demodification of cmnm(5)s(2)U34 to nm(5)s(2)U34, followed by the transfer of a methyl group from S-adenosyl-L-methionine to nm(5)s(2)U34, to form mnm(5)s(2)U34. The sequence is that of tRNA 5-methylaminomethyl-2-thiouridine biosynthesis bifunctional protein MnmC from Pseudoalteromonas translucida (strain TAC 125).